We begin with the raw amino-acid sequence, 119 residues long: Large ribosomal subunit protein bL20 (119 aa).

The protein belongs to the bacterial ribosomal protein bL20 family.

Binds directly to 23S ribosomal RNA and is necessary for the in vitro assembly process of the 50S ribosomal subunit. It is not involved in the protein synthesizing functions of that subunit. The polypeptide is Large ribosomal subunit protein bL20 (Xylella fastidiosa (strain M23)).